Reading from the N-terminus, the 198-residue chain is HTH-type transcriptional regulator BetI (198 aa).

The HTH tetR-type domain maps to 8–68 (PIRRQQLIEA…ATMRYLIRHL (61 aa)). The segment at residues 31–50 (SIAQIAKRAGVSNGIISHYF) is a DNA-binding region (H-T-H motif).

It functions in the pathway amine and polyamine biosynthesis; betaine biosynthesis via choline pathway [regulation]. In terms of biological role, repressor involved in the biosynthesis of the osmoprotectant glycine betaine. It represses transcription of the choline transporter BetT and the genes of BetAB involved in the synthesis of glycine betaine. In Yersinia pseudotuberculosis serotype O:1b (strain IP 31758), this protein is HTH-type transcriptional regulator BetI.